The primary structure comprises 261 residues: Acetylglutamate kinase (261 aa).

Substrate contacts are provided by residues 45–46 (GG), arginine 67, and asparagine 162.

This sequence belongs to the acetylglutamate kinase family. ArgB subfamily.

The protein resides in the cytoplasm. It catalyses the reaction N-acetyl-L-glutamate + ATP = N-acetyl-L-glutamyl 5-phosphate + ADP. It functions in the pathway amino-acid biosynthesis; L-arginine biosynthesis; N(2)-acetyl-L-ornithine from L-glutamate: step 2/4. Its function is as follows. Catalyzes the ATP-dependent phosphorylation of N-acetyl-L-glutamate. This is Acetylglutamate kinase from Bacteroides fragilis (strain ATCC 25285 / DSM 2151 / CCUG 4856 / JCM 11019 / LMG 10263 / NCTC 9343 / Onslow / VPI 2553 / EN-2).